The sequence spans 192 residues: Xanthine phosphoribosyltransferase (192 aa).

2 residues coordinate xanthine: Leu-20 and Asn-27. 128 to 132 (AHGEA) is a binding site for 5-phospho-alpha-D-ribose 1-diphosphate. Lys-156 lines the xanthine pocket.

It belongs to the purine/pyrimidine phosphoribosyltransferase family. Xpt subfamily. In terms of assembly, homodimer.

It localises to the cytoplasm. The catalysed reaction is XMP + diphosphate = xanthine + 5-phospho-alpha-D-ribose 1-diphosphate. It functions in the pathway purine metabolism; XMP biosynthesis via salvage pathway; XMP from xanthine: step 1/1. In terms of biological role, converts the preformed base xanthine, a product of nucleic acid breakdown, to xanthosine 5'-monophosphate (XMP), so it can be reused for RNA or DNA synthesis. The polypeptide is Xanthine phosphoribosyltransferase (Lactobacillus johnsonii (strain CNCM I-12250 / La1 / NCC 533)).